Reading from the N-terminus, the 604-residue chain is Replication protein E1 (604 aa).

A Nuclear localization signal motif is present at residues 79 to 81 (KRK). Phosphoserine; by host occurs at positions 84 and 92. A DNA-binding region region spans residues 144–307 (EGDIGLGTVR…TMIQHQTADT (164 aa)). In terms of domain architecture, SF3 helicase spans 406 to 556 (LNFIMFLDKF…FPFDSDNKPL (151 aa)). 432 to 439 (GPPDTGKS) serves as a coordination point for ATP. Lys513 is covalently cross-linked (Glycyl lysine isopeptide (Lys-Gly) (interchain with G-Cter in SUMO)).

This sequence belongs to the papillomaviridae E1 protein family. As to quaternary structure, can form hexamers. Interacts with E2 protein; this interaction increases E1 DNA binding specificity. Interacts with host DNA polymerase subunit POLA2. Interacts with host single stranded DNA-binding protein RPA1. Interacts with host TOP1; this interaction stimulates the enzymatic activity of TOP1. Post-translationally, phosphorylated. In terms of processing, sumoylated.

It localises to the host nucleus. It catalyses the reaction Couples ATP hydrolysis with the unwinding of duplex DNA by translocating in the 3'-5' direction.. It carries out the reaction ATP + H2O = ADP + phosphate + H(+). In terms of biological role, ATP-dependent DNA 3'-5' helicase required for initiation of viral DNA replication. It forms a complex with the viral E2 protein. The E1-E2 complex binds to the replication origin which contains binding sites for both proteins. During the initial step, a dimer of E1 interacts with a dimer of protein E2 leading to a complex that binds the viral origin of replication with high specificity. Then, a second dimer of E1 displaces the E2 dimer in an ATP-dependent manner to form the E1 tetramer. Following this, two E1 monomers are added to each half of the site, which results in the formation of two E1 trimers on the viral ori. Subsequently, two hexamers will be created. The double hexamer acts as a bi-directional helicase machinery and unwinds the viral DNA and then recruits the host DNA polymerase to start replication. The protein is Replication protein E1 of Homo sapiens (Human).